Reading from the N-terminus, the 71-residue chain is UPF0337 protein RPA4418 (71 aa).

A disordered region spans residues 1-54 (MGSTMDKIKGQANELAGKAKQGIGEATGSDKLKGEGAIQEAKGHGQQALGNAKD).

The protein belongs to the UPF0337 (CsbD) family.

This Rhodopseudomonas palustris (strain ATCC BAA-98 / CGA009) protein is UPF0337 protein RPA4418.